A 234-amino-acid chain; its full sequence is Prolactin-6A1 (234 aa).

The N-terminal stretch at 1-33 (MVKSWLRMSKKMEAGTLLMLLMSNILLWENVAS) is a signal peptide. The N-linked (GlcNAc...) asparagine glycan is linked to asparagine 61. 2 cysteine pairs are disulfide-bonded: cysteine 93–cysteine 209 and cysteine 226–cysteine 234.

This sequence belongs to the somatotropin/prolactin family.

It localises to the secreted. The chain is Prolactin-6A1 (Prl6a1) from Rattus norvegicus (Rat).